Here is a 441-residue protein sequence, read N- to C-terminus: Probable pyridine nucleotide-disulfide oxidoreductase RclA (441 aa).

An FAD-binding site is contributed by 33–43; the sequence is EQSNAMYGGTC. A disulfide bond links C43 and C48. Catalysis depends on H426, which acts as the Proton acceptor.

Belongs to the class-I pyridine nucleotide-disulfide oxidoreductase family. Requires FAD as cofactor.

Functionally, probably involved in reactive chlorine species (RCS) stress resistance. This is Probable pyridine nucleotide-disulfide oxidoreductase RclA (rclA) from Escherichia coli (strain K12).